A 393-amino-acid polypeptide reads, in one-letter code: CAI-1 autoinducer synthase (393 aa).

Lys240 carries the N6-(pyridoxal phosphate)lysine modification.

The protein belongs to the class-II pyridoxal-phosphate-dependent aminotransferase family. Pyridoxal 5'-phosphate is required as a cofactor.

In terms of biological role, required for the synthesis of the quorum-sensing autoinducer CAI-1 ((S)-3-hydroxytridecan-4-one) which probably functions as an intragenus signal. In Vibrio campbellii (strain ATCC BAA-1116), this protein is CAI-1 autoinducer synthase (cqsA).